The chain runs to 906 residues: MCRIAGAPRTLLPLLAALLQASVEASGEIALCKTGFPEDVYSAVLPKDVHEGQPLLNVKFSNCNRKRKVQYESSEPADFKVDEDGTVYAVRSFPLTAEQAKFLIYAQDKETQEKWQVAVNLSREPTLTEEPMKEPHEIEEIVFPRQLAKHSGALQRQKRDWVIPPINLPENSRGPFPQELVRIRSDRDKNLSLRYSVTGPGADQPPTGIFIINPISGQLSVTKPLDRELIARFHLRAHAVDINGNQVENPIDIVINVIDMNDNRPEFLHQVWNGSVPEGSKPGTYVMTVTAIDADDPNALNGMLRYRILSQAPSTPSPNMFTINNETGDIITVAAGLDREKVQQYTLIIQATDMEGNPTYGLSNTATAVITVTDVNDNPPEFTAMTFYGEVPENRVDVIVANLTVTDKDQPHTPAWNAAYRISGGDPTGRFAILTDPNSNDGLVTVVKPIDFETNRMFVLTVAAENQVPLAKGIQHPPQSTATVSVTVIDVNENPYFAPNPKIIRQEEGLHAGTMLTTLTAQDPDRYMQQNIRYTKLSDPANWLKIDPVNGQITTIAVLDRESPNVKNNIYNATFLASDNGIPPMSGTGTLQIYLLDINDNAPQVLPQEAETCETPEPNSINITALDYDIDPNAGPFAFDLPLSPVTIKRNWTINRLNGDFAQLNLKIKFLEAGIYEVPIIITDSGNPPKSNISILRVKVCQCDSNGDCTDVDRIVGAGLGTGAIIAILLCIIILLILVLMFVVWMKRRDKERQAKQLLIDPEDDVRDNILKYDEEGGGEEDQDYDLSQLQQPDTVEPDAIKPVGIRRLDERPIHAEPQYPVRSAAPHPGDIGDFINEGLKAADNDPTAPPYDSLLVFDYEGSGSTAGSLSSLNSSSSGGDQDYDYLNDWGPRFKKLADMYGGGDD.

An N-terminal signal peptide occupies residues 1 to 25 (MCRIAGAPRTLLPLLAALLQASVEA). Residues 26–159 (SGEIALCKTG…HSGALQRQKR (134 aa)) constitute a propeptide that is removed on maturation. 5 Cadherin domains span residues 160–267 (DWVI…RPEF), 268–382 (LHQV…PPEF), 383–497 (TAMT…NPYF), 498–603 (APNP…DNAP), and 604–717 (QVLP…RIVG). Topologically, residues 160–724 (DWVIPPINLP…IVGAGLGTGA (565 aa)) are extracellular. E170 contacts Ca(2+). N190 carries an N-linked (GlcNAc...) asparagine glycan. D226, E228, D259, M260, N261, D262, and N263 together coordinate Ca(2+). A glycan (N-linked (GlcNAc...) asparagine) is linked at N273. The Ca(2+) site is built by D293, D295, and N301. N325 carries an N-linked (GlcNAc...) asparagine glycan. A Ca(2+)-binding site is contributed by D353. Residues N402, N572, N651, and N692 are each glycosylated (N-linked (GlcNAc...) asparagine). The helical transmembrane segment at 725-745 (IIAILLCIIILLILVLMFVVW) threads the bilayer. Residues 746–906 (MKRRDKERQA…LADMYGGGDD (161 aa)) are Cytoplasmic-facing. Low complexity predominate over residues 863–880 (SGSTAGSLSSLNSSSSGG). A disordered region spans residues 863-883 (SGSTAGSLSSLNSSSSGGDQD).

As to quaternary structure, homodimer (via extracellular region). Can also form heterodimers with other cadherins (via extracellular region). Dimerization occurs in trans, i.e. with a cadherin chain from another cell. Interacts with CDCP1. Interacts with PCDH8; this complex may also include TAOK2. The interaction with PCDH8 may lead to internalization through TAOK2/p38 MAPK pathway. Identified in a complex containing FGFR4, NCAM1, CDH2, PLCG1, FRS2, SRC, SHC1, GAP43 and CTTN. May interact with OBSCN (via protein kinase domain 2). Interacts with FBXO45. Post-translationally, cleaved by MMP24. Ectodomain cleavage leads to the generation of a soluble 90 kDa N-terminal soluble fragment and a 45 kDa membrane-bound C-terminal fragment 1 (CTF1), which is further cleaved by gamma-secretase into a 35 kDa. Cleavage in neural stem cells by MMP24 affects CDH2-mediated anchorage of neural stem cells to ependymocytes in the adult subependymal zone, leading to modulate neural stem cell quiescence. May be phosphorylated by OBSCN. In terms of processing, O-glycosylated on Ser and Thr residues. In terms of tissue distribution, expressed in cardiac muscle (at protein level).

It localises to the cell membrane. The protein resides in the sarcolemma. Its subcellular location is the cell junction. The protein localises to the adherens junction. It is found in the desmosome. It localises to the cell surface. Functionally, calcium-dependent cell adhesion protein; preferentially mediates homotypic cell-cell adhesion by dimerization with a CDH2 chain from another cell. Cadherins may thus contribute to the sorting of heterogeneous cell types. Acts as a regulator of neural stem cells quiescence by mediating anchorage of neural stem cells to ependymocytes in the adult subependymal zone: upon cleavage by MMP24, CDH2-mediated anchorage is affected, leading to modulate neural stem cell quiescence. Plays a role in cell-to-cell junction formation between pancreatic beta cells and neural crest stem (NCS) cells, promoting the formation of processes by NCS cells. Required for proper neurite branching. Required for pre- and postsynaptic organization. CDH2 may be involved in neuronal recognition mechanism. In hippocampal neurons, may regulate dendritic spine density. The chain is Cadherin-2 (Cdh2) from Mus musculus (Mouse).